The following is a 319-amino-acid chain: Acetyl-coenzyme A carboxylase carboxyl transferase subunit alpha (319 aa).

A CoA carboxyltransferase C-terminal domain is found at 31–292 (EIDSAIRSLR…KTYLSRQLSE (262 aa)).

This sequence belongs to the AccA family. As to quaternary structure, acetyl-CoA carboxylase is a heterohexamer composed of biotin carboxyl carrier protein (AccB), biotin carboxylase (AccC) and two subunits each of ACCase subunit alpha (AccA) and ACCase subunit beta (AccD).

Its subcellular location is the cytoplasm. It carries out the reaction N(6)-carboxybiotinyl-L-lysyl-[protein] + acetyl-CoA = N(6)-biotinyl-L-lysyl-[protein] + malonyl-CoA. Its pathway is lipid metabolism; malonyl-CoA biosynthesis; malonyl-CoA from acetyl-CoA: step 1/1. Functionally, component of the acetyl coenzyme A carboxylase (ACC) complex. First, biotin carboxylase catalyzes the carboxylation of biotin on its carrier protein (BCCP) and then the CO(2) group is transferred by the carboxyltransferase to acetyl-CoA to form malonyl-CoA. This Rhodopirellula baltica (strain DSM 10527 / NCIMB 13988 / SH1) protein is Acetyl-coenzyme A carboxylase carboxyl transferase subunit alpha.